The chain runs to 192 residues: Fe/S biogenesis protein NfuA (192 aa).

The [4Fe-4S] cluster site is built by Cys149 and Cys152.

It belongs to the NfuA family. As to quaternary structure, homodimer. It depends on [4Fe-4S] cluster as a cofactor.

Functionally, involved in iron-sulfur cluster biogenesis. Binds a 4Fe-4S cluster, can transfer this cluster to apoproteins, and thereby intervenes in the maturation of Fe/S proteins. Could also act as a scaffold/chaperone for damaged Fe/S proteins. The polypeptide is Fe/S biogenesis protein NfuA (Shewanella sp. (strain ANA-3)).